The chain runs to 353 residues: Methylthioribose-1-phosphate isomerase (353 aa).

Residues 51-53 (RGA), Arg94, and Gln203 contribute to the substrate site. The active-site Proton donor is Asp244. Substrate is bound at residue 254 to 255 (NK).

The protein belongs to the eIF-2B alpha/beta/delta subunits family. MtnA subfamily.

It carries out the reaction 5-(methylsulfanyl)-alpha-D-ribose 1-phosphate = 5-(methylsulfanyl)-D-ribulose 1-phosphate. The protein operates within amino-acid biosynthesis; L-methionine biosynthesis via salvage pathway; L-methionine from S-methyl-5-thio-alpha-D-ribose 1-phosphate: step 1/6. Functionally, catalyzes the interconversion of methylthioribose-1-phosphate (MTR-1-P) into methylthioribulose-1-phosphate (MTRu-1-P). The protein is Methylthioribose-1-phosphate isomerase of Trichodesmium erythraeum (strain IMS101).